A 269-amino-acid chain; its full sequence is Hdr-like menaquinol oxidoreductase iron-sulfur subunit 1 (269 aa).

Residues 1–26 (MMSRRKFLLLTGAAAAGAILTPQISA) constitute a signal peptide (tat-type signal). 16 residues coordinate [4Fe-4S] cluster: cysteine 52, cysteine 55, cysteine 72, cysteine 76, cysteine 118, cysteine 121, cysteine 126, cysteine 130, cysteine 150, cysteine 153, cysteine 156, cysteine 160, cysteine 194, cysteine 197, cysteine 215, and cysteine 219. The region spanning 141-170 (GIVEIDMHRCIGCRYCMIACPYGARCFNFI) is the 4Fe-4S ferredoxin-type domain.

In terms of assembly, consists of five subunits: an integral membrane subunit, a cytochrome b-like subunit, a cytochrome c subunit and two iron-sulfur subunits. [4Fe-4S] cluster is required as a cofactor. Predicted to be exported by the Tat system. The position of the signal peptide cleavage has been experimentally proven.

It localises to the cell membrane. In terms of biological role, has menaquinol-oxidizing activity. HmeA, HmeB and HmeE subunits may together catalyze electron transfer from menaquinol to cytochrome c. The polypeptide is Hdr-like menaquinol oxidoreductase iron-sulfur subunit 1 (hmeA) (Archaeoglobus fulgidus (strain ATCC 49558 / DSM 4304 / JCM 9628 / NBRC 100126 / VC-16)).